Consider the following 400-residue polypeptide: Mannitol-1-phosphate 5-dehydrogenase (400 aa).

12–23 (AVHFGAGNIGRG) serves as a coordination point for NAD(+). Residue Lys221 is part of the active site.

This sequence belongs to the mannitol dehydrogenase family. Monomer.

The enzyme catalyses D-mannitol 1-phosphate + NAD(+) = beta-D-fructose 6-phosphate + NADH + H(+). Its function is as follows. Catalyzes the NAD(H)-dependent interconversion of D-fructose 6-phosphate and D-mannitol 1-phosphate in the mannitol metabolic pathway. The polypeptide is Mannitol-1-phosphate 5-dehydrogenase (Pyricularia oryzae (strain Y34) (Rice blast fungus)).